We begin with the raw amino-acid sequence, 158 residues long: 3-hydroxyacyl-[acyl-carrier-protein] dehydratase FabZ (158 aa).

Residue H62 is part of the active site.

Belongs to the thioester dehydratase family. FabZ subfamily.

It localises to the cytoplasm. The catalysed reaction is a (3R)-hydroxyacyl-[ACP] = a (2E)-enoyl-[ACP] + H2O. Functionally, involved in unsaturated fatty acids biosynthesis. Catalyzes the dehydration of short chain beta-hydroxyacyl-ACPs and long chain saturated and unsaturated beta-hydroxyacyl-ACPs. This chain is 3-hydroxyacyl-[acyl-carrier-protein] dehydratase FabZ, found in Novosphingobium aromaticivorans (strain ATCC 700278 / DSM 12444 / CCUG 56034 / CIP 105152 / NBRC 16084 / F199).